Reading from the N-terminus, the 573-residue chain is Adenine deaminase (573 aa).

This sequence belongs to the metallo-dependent hydrolases superfamily. Adenine deaminase family. Requires Mn(2+) as cofactor.

The catalysed reaction is adenine + H2O + H(+) = hypoxanthine + NH4(+). The polypeptide is Adenine deaminase (Bacillus licheniformis (strain ATCC 14580 / DSM 13 / JCM 2505 / CCUG 7422 / NBRC 12200 / NCIMB 9375 / NCTC 10341 / NRRL NRS-1264 / Gibson 46)).